A 501-amino-acid polypeptide reads, in one-letter code: Group 3 secretory phospholipase A2 (501 aa).

An N-terminal signal peptide occupies residues 1–19; the sequence is MGVLVVLLGVLSFLGRTLG. Residues 119-139 are disordered; sequence RGPAESPAGTREKRAAGQNGV. Residues 150-291 are phospholipase A2-like; that stretch reads GWTVPGTLWC…SWSSPATSLT (142 aa). The Ca(2+) site is built by tryptophan 158, glycine 160, and glycine 162. Intrachain disulfides connect cysteine 159-cysteine 181, cysteine 180-cysteine 220, cysteine 187-cysteine 213, and cysteine 211-cysteine 244. An N-linked (GlcNAc...) asparagine glycan is attached at asparagine 167. Histidine 184 is a catalytic residue. Position 185 (aspartate 185) interacts with Ca(2+). Residue aspartate 214 is part of the active site. Residue asparagine 280 is glycosylated (N-linked (GlcNAc...) asparagine). Polar residues predominate over residues 284-298; that stretch reads SSPATSLTPSPQNPA. The tract at residues 284 to 339 is disordered; it reads SSPATSLTPSPQNPALSRPQPMQHPQQWPSEWKESKSPSKTNATALQAPVASPGSD. N-linked (GlcNAc...) asparagine glycans are attached at residues asparagine 325 and asparagine 403.

It belongs to the phospholipase A2 family. The cofactor is Ca(2+). N-glycosylation does not affect the catalytic activity, but is required for proper secretion. A nonglycosylated form was observed in several cell types. Post-translationally, in several cell types, the N- and C-termini are cleaved off.

It localises to the secreted. It is found in the cell membrane. The protein resides in the cytoplasm. The protein localises to the cytoskeleton. Its subcellular location is the microtubule organizing center. It localises to the centrosome. It is found in the centriole. The protein resides in the recycling endosome. It carries out the reaction a 1,2-diacyl-sn-glycero-3-phosphocholine + H2O = a 1-acyl-sn-glycero-3-phosphocholine + a fatty acid + H(+). The catalysed reaction is 1-hexadecanoyl-2-(9Z,12Z-octadecadienoyl)-sn-glycero-3-phosphocholine + H2O = (9Z,12Z)-octadecadienoate + 1-hexadecanoyl-sn-glycero-3-phosphocholine + H(+). It catalyses the reaction 1-hexadecanoyl-2-(5Z,8Z,11Z,14Z-eicosatetraenoyl)-sn-glycero-3-phosphocholine + H2O = 1-hexadecanoyl-sn-glycero-3-phosphocholine + (5Z,8Z,11Z,14Z)-eicosatetraenoate + H(+). The enzyme catalyses 1-hexadecanoyl-2-(9Z,12Z-octadecadienoyl)-sn-glycero-3-phosphoethanolamine + H2O = 1-hexadecanoyl-sn-glycero-3-phosphoethanolamine + (9Z,12Z)-octadecadienoate + H(+). It carries out the reaction 1-hexadecanoyl-2-(5Z,8Z,11Z,14Z-eicosatetraenoyl)-sn-glycero-3-phosphoethanolamine + H2O = 1-hexadecanoyl-sn-glycero-3-phosphoethanolamine + (5Z,8Z,11Z,14Z)-eicosatetraenoate + H(+). Its function is as follows. Secretory calcium-dependent phospholipase A2 that primarily targets extracellular phospholipids. Hydrolyzes the ester bond of the fatty acyl group attached at sn-2 position of phospholipids without apparent head group selectivity. Contributes to phospholipid remodeling of low-density lipoprotein (LDL) and high-density lipoprotein (HDL) particles. Hydrolyzes LDL phospholipids releasing unsaturated fatty acids that regulate macrophage differentiation toward foam cells. May act in an autocrine and paracrine manner. Secreted by immature mast cells, acts on nearby fibroblasts upstream to PTDGS to synthesize prostaglandin D2 (PGD2), which in turn promotes mast cell maturation and degranulation via PTGDR. Secreted by epididymal epithelium, acts on immature sperm cells within the duct, modulating the degree of unsaturation of the fatty acyl components of phosphatidylcholines required for acrosome assembly and sperm cell motility. Facilitates the replacement of fatty acyl chains in phosphatidylcholines in sperm membranes from omega-6 and omega-9 to omega-3 polyunsaturated fatty acids (PUFAs). Coupled to lipoxygenase pathway, may process omega-6 PUFAs to generate oxygenated lipid mediators in the male reproductive tract. At pericentrosomal preciliary compartment, negatively regulates ciliogenesis likely by regulating endocytotic recycling of ciliary membrane protein. Coupled to cyclooxygenase pathway provides arachidonate to generate prostaglandin E2 (PGE2), a potent immunomodulatory lipid in inflammation and tumorigenesis. At colonic epithelial barrier, preferentially hydrolyzes phospholipids having arachidonate and docosahexaenoate at sn-2 position, contributing to the generation of oxygenated metabolites involved in colonic stem cell homeostasis. Releases C16:0 and C18:0 lysophosphatidylcholine subclasses from neuron plasma membranes and promotes neurite outgrowth and neuron survival. The chain is Group 3 secretory phospholipase A2 (PLA2G3) from Bos taurus (Bovine).